The chain runs to 200 residues: Glycerol-3-phosphate acyltransferase (200 aa).

5 helical membrane-spanning segments follow: residues 2–22, 51–71, 84–104, 114–134, and 158–178; these read FNIPAVAVSYLIGSLSFAVIV, KAAALTLLGDAAKGLVAVLLA, AIAAVALAALVGHMWPVFFGF, LGVLLALSPTTALVCALIWLV, and LFFMPHTSWIFATLAIAILVL.

Belongs to the PlsY family. As to quaternary structure, probably interacts with PlsX.

Its subcellular location is the cell inner membrane. The catalysed reaction is an acyl phosphate + sn-glycerol 3-phosphate = a 1-acyl-sn-glycero-3-phosphate + phosphate. The protein operates within lipid metabolism; phospholipid metabolism. Catalyzes the transfer of an acyl group from acyl-phosphate (acyl-PO(4)) to glycerol-3-phosphate (G3P) to form lysophosphatidic acid (LPA). This enzyme utilizes acyl-phosphate as fatty acyl donor, but not acyl-CoA or acyl-ACP. This chain is Glycerol-3-phosphate acyltransferase, found in Neisseria meningitidis serogroup A / serotype 4A (strain DSM 15465 / Z2491).